We begin with the raw amino-acid sequence, 568 residues long: Nitrite reductase (568 aa).

The first 25 residues, 1–25 (MPFGKPLVGTLLASLTLLGLATAHA), serve as a signal peptide directing secretion. The interval 26 to 54 (KDDMKAAEQYQGAASAVDPAHVVRTNGAP) is N-terminal tail. Residues 55-140 (DMSESEFNEA…AKYIQHTPPQ (86 aa)) form the Cytochrome c domain. 6 residues coordinate heme c: C72, C75, H76, R96, T109, and M113. Residues 141–568 (PPEWGMPEMR…NVYNTQHDVY (428 aa)) form a D1-heme domain region. Heme d1 is bound by residues H207, R250, S251, Y270, R397, and Q508.

As to quaternary structure, homodimer. The cofactor is heme c. It depends on heme as a cofactor.

It is found in the periplasm. It catalyses the reaction nitric oxide + Fe(III)-[cytochrome c] + H2O = Fe(II)-[cytochrome c] + nitrite + 2 H(+). The catalysed reaction is A + NH4(+) + H2O = hydroxylamine + AH2 + H(+). This chain is Nitrite reductase (nirS), found in Pseudomonas aeruginosa (strain ATCC 15692 / DSM 22644 / CIP 104116 / JCM 14847 / LMG 12228 / 1C / PRS 101 / PAO1).